The following is a 347-amino-acid chain: NADH-ubiquinone oxidoreductase chain 2 (347 aa).

10 helical membrane-spanning segments follow: residues 13–33 (IILG…WIGF), 59–79 (YFLT…TNLL), 96–116 (AVMT…FWVP), 122–142 (IPLS…LSVL), 149–169 (VSPT…GWGG), 178–198 (ILAY…AYNP), 201–221 (TLLN…LFMF), 247–267 (IMLS…WMII), 274–294 (ESLL…YFYM), and 323–343 (VPLL…APAL).

It belongs to the complex I subunit 2 family. As to quaternary structure, core subunit of respiratory chain NADH dehydrogenase (Complex I) which is composed of 45 different subunits. Interacts with TMEM242.

Its subcellular location is the mitochondrion inner membrane. The catalysed reaction is a ubiquinone + NADH + 5 H(+)(in) = a ubiquinol + NAD(+) + 4 H(+)(out). Core subunit of the mitochondrial membrane respiratory chain NADH dehydrogenase (Complex I) which catalyzes electron transfer from NADH through the respiratory chain, using ubiquinone as an electron acceptor. Essential for the catalytic activity and assembly of complex I. The protein is NADH-ubiquinone oxidoreductase chain 2 of Megaderma spasma (Lesser false vampire bat).